The primary structure comprises 1861 residues: Golgi-specific brefeldin A-resistance guanine nucleotide exchange factor 1 (1861 aa).

The tract at residues 1–211 (MVDKNIYIIQ…EPKSYVGTNM (211 aa)) is DCB; DCB:DCB domain and DCB:HUS domain interaction. The tract at residues 1–380 (MVDKNIYIIQ…SVHDMDYVNP (380 aa)) is interaction with RAB1B. 2 disordered regions span residues 210–264 (NMKK…LTGG) and 289–353 (CTDS…VESI). Residues 227 to 241 (WKKQKRSPRPPRHTT) are compositionally biased toward basic residues. Positions 253–262 (NGATLPSNLT) are enriched in polar residues. A phosphoserine mark is found at Ser349 and Ser352. Phosphothreonine is present on Thr507. The HUS; DCB:HUS domain interaction stretch occupies residues 530–550 (RIPSFVTELYINYDCDYYCSN). Positions 603-634 (QEKKETARPGFEAVDGNPETNKSERATSDGKS) are disordered. Positions 692 to 882 (ELIEIKNKKK…EDMYHAIKNE (191 aa)) constitute an SEC7 domain. The segment at 886 to 1372 (MPEEQTGLVR…LSRPGPSPLV (487 aa)) is phosphatidylinositol-phosphate binding; required for translocation to the leading edge and for ARF1 activation upon GPCR signaling. Positions 1286 to 1296 (TARADAPDAGA) are enriched in low complexity. A disordered region spans residues 1286 to 1335 (TARADAPDAGAQSDSELPSYHQNDVSLDRGYTSDSEVYTDHGRPGKIHRS). The span at 1297–1310 (QSDSELPSYHQNDV) shows a compositional bias: polar residues. Residue Ser1298 is modified to Phosphoserine. Tyr1316 carries the phosphotyrosine modification. Ser1318, Ser1320, and Ser1335 each carry phosphoserine. Thr1337 bears the Phosphothreonine mark. 2 disordered regions span residues 1431–1486 (GCKS…EGVP) and 1727–1812 (PMPA…PLIL). Residues 1434 to 1448 (SQDKRSKSHKYDSKG) show a composition bias toward basic and acidic residues. Phosphoserine is present on residues Ser1477, Ser1775, and Ser1786. Residues 1776 to 1793 (TRAPSSSSPGSPMASSPS) show a composition bias toward low complexity.

As to quaternary structure, can form homodimers and probably homotetramers. Interacts with COPG1; the interaction is independent on ARF1 activation. Interacts with ARF1, ARF3, ARF4 and ARF5. Interacts with RAB1B (GTP-bound form); required for GBF1 membrane association. Interacts with GGA1, GGA2 and GGA3. Interacts with USO1. Interacts (via SEC7 domain) with PNPLA2 (via C-terminus); the interaction is direct. Interacts with ARMH3.

The protein resides in the golgi apparatus. Its subcellular location is the cis-Golgi network. It localises to the endoplasmic reticulum-Golgi intermediate compartment. It is found in the trans-Golgi network. The protein localises to the cytoplasm. The protein resides in the lipid droplet. Its subcellular location is the membrane. In terms of biological role, guanine-nucleotide exchange factor (GEF) for members of the Arf family of small GTPases involved in trafficking in the early secretory pathway; its GEF activity initiates the coating of nascent vesicles via the localized generation of activated ARFs through replacement of GDP with GTP. Recruitment to cis-Golgi membranes requires membrane association of Arf-GDP and can be regulated by ARF1, ARF3, ARF4 and ARF5. Involved in the recruitment of the COPI coat complex to the endoplasmic reticulum exit sites (ERES), and the endoplasmic reticulum-Golgi intermediate (ERGIC) and cis-Golgi compartments which implicates ARF1 activation. Involved in COPI vesicle-dependent retrograde transport from the ERGIC and cis-Golgi compartments to the endoplasmic reticulum (ER). Involved in the trans-Golgi network recruitment of GGA1, GGA2, GGA3, BIG1, BIG2, and the AP-1 adaptor protein complex related to chlathrin-dependent transport; the function requires its GEF activity (probably at least in part on ARF4 and ARF5). Has GEF activity towards ARF1. Has in vitro GEF activity towards ARF5. Involved in the processing of PSAP. Required for the assembly of the Golgi apparatus. The AMPK-phosphorylated form is involved in Golgi disassembly during mitotis and under stress conditions. May be involved in the COPI vesicle-dependent recruitment of PNPLA2 to lipid droplets; however, this function is under debate. In neutrophils, involved in G protein-coupled receptor (GPCR)-mediated chemotaxis und superoxide production. Proposed to be recruited by phosphatidylinositol-phosphates generated upon GPCR stimulation to the leading edge where it recruits and activates ARF1, and is involved in recruitment of GIT2 and the NADPH oxidase complex. Plays a role in maintaining mitochondrial morphology. The polypeptide is Golgi-specific brefeldin A-resistance guanine nucleotide exchange factor 1 (Mus musculus (Mouse)).